Reading from the N-terminus, the 329-residue chain is Probable alpha-1,2-galactosyltransferase gmh1 (329 aa).

Residues 1–14 are Cytoplasmic-facing; that stretch reads MLSFFTKNTLTKRK. A helical; Signal-anchor for type II membrane protein transmembrane segment spans residues 15-35; sequence LIMLALAIVFTFFAFGLYFIP. Topologically, residues 36 to 329 are lumenal; the sequence is HDEISVFDFK…LWTKYKDKII (294 aa). N-linked (GlcNAc...) asparagine glycans are attached at residues Asn127 and Asn169.

The protein belongs to the glycosyltransferase 34 family.

The protein localises to the golgi apparatus membrane. This Schizosaccharomyces pombe (strain 972 / ATCC 24843) (Fission yeast) protein is Probable alpha-1,2-galactosyltransferase gmh1 (gmh1).